A 406-amino-acid polypeptide reads, in one-letter code: Imidazolonepropionase (406 aa).

Fe(3+)-binding residues include His-67 and His-69. The Zn(2+) site is built by His-67 and His-69. Positions 76, 139, and 172 each coordinate 4-imidazolone-5-propanoate. Tyr-139 contributes to the N-formimidoyl-L-glutamate binding site. His-237 is a binding site for Fe(3+). His-237 contributes to the Zn(2+) binding site. Residue Gln-240 coordinates 4-imidazolone-5-propanoate. Asp-312 is a binding site for Fe(3+). Asp-312 contacts Zn(2+). Asn-314 and Gly-316 together coordinate N-formimidoyl-L-glutamate. Thr-317 contacts 4-imidazolone-5-propanoate.

It belongs to the metallo-dependent hydrolases superfamily. HutI family. It depends on Zn(2+) as a cofactor. Requires Fe(3+) as cofactor.

It localises to the cytoplasm. The catalysed reaction is 4-imidazolone-5-propanoate + H2O = N-formimidoyl-L-glutamate. The protein operates within amino-acid degradation; L-histidine degradation into L-glutamate; N-formimidoyl-L-glutamate from L-histidine: step 3/3. Catalyzes the hydrolytic cleavage of the carbon-nitrogen bond in imidazolone-5-propanoate to yield N-formimidoyl-L-glutamate. It is the third step in the universal histidine degradation pathway. This chain is Imidazolonepropionase, found in Paraburkholderia phymatum (strain DSM 17167 / CIP 108236 / LMG 21445 / STM815) (Burkholderia phymatum).